The chain runs to 281 residues: MKHPFSRLFSFGEKEQEEAGGKQEREEVRNIPVASIIPNRFQPRTVFDEEKIAELALTIRTHGIIQPIVVRECDNGQFEIIAGERRWRAVQKLGWTEIPAIIKNLNDKETASVALIENLQREELTPIEEAMAYARLIELHDLTQEALAQRLGKGQSTIANKLRLLKLPQEVQEALLQRAITERHARALIALKDKEKQLKLLQEIIDKQLNVKQTEDRVLKMLEAGERKPKPKRKAFSRDMRIAVNTIRQSLSMVENSGVSVHSEEEEFDDYYQITIRIAKK.

The disordered stretch occupies residues M1–E26. Basic and acidic residues predominate over residues G12 to E26. The H-T-H motif DNA-binding region spans E145–L164.

It belongs to the ParB family.

The protein localises to the cytoplasm. The protein resides in the nucleoid. Its function is as follows. Effects nucleoid occlusion by binding relatively nonspecifically to DNA and preventing the assembly of the division machinery in the vicinity of the nucleoid, especially under conditions that disturb the cell cycle. It helps to coordinate cell division and chromosome segregation by preventing the formation of the Z ring through the nucleoid, which would cause chromosome breakage. This is Nucleoid occlusion protein from Geobacillus thermodenitrificans (strain NG80-2).